A 458-amino-acid chain; its full sequence is Tetratricopeptide repeat protein 23-like (458 aa).

2 coiled-coil regions span residues Gly175 to Gly198 and Thr246 to Ser278.

Its subcellular location is the cytoplasm. It localises to the cytoskeleton. It is found in the microtubule organizing center. The protein resides in the centrosome. The protein localises to the spindle. Its subcellular location is the midbody. The chain is Tetratricopeptide repeat protein 23-like (Ttc23l) from Mus musculus (Mouse).